A 154-amino-acid chain; its full sequence is Catabolic 3-dehydroquinase (154 aa).

Y25 functions as the Proton acceptor in the catalytic mechanism. Substrate contacts are provided by N79, H85, and D92. The active-site Proton donor is H105. Residues 106–107 and R116 contribute to the substrate site; that span reads IS.

The protein belongs to the type-II 3-dehydroquinase family. In terms of assembly, homododecamer. Adopts a ring-like structure, composed of an arrangement of two hexameric rings stacked on top of one another.

It catalyses the reaction 3-dehydroquinate = 3-dehydroshikimate + H2O. It functions in the pathway aromatic compound metabolism; 3,4-dihydroxybenzoate biosynthesis; 3,4-dihydroxybenzoate from 3-dehydroquinate: step 1/2. Is involved in the catabolism of quinate. Allows the utilization of quinate as carbon source via the beta-ketoadipate pathway. The polypeptide is Catabolic 3-dehydroquinase (Sclerotinia sclerotiorum (strain ATCC 18683 / 1980 / Ss-1) (White mold)).